A 268-amino-acid chain; its full sequence is Ribosomal RNA small subunit methyltransferase A (268 aa).

The S-adenosyl-L-methionine site is built by asparagine 23, leucine 25, glycine 50, glutamate 72, aspartate 94, and asparagine 116.

It belongs to the class I-like SAM-binding methyltransferase superfamily. rRNA adenine N(6)-methyltransferase family. RsmA subfamily.

The protein resides in the cytoplasm. The enzyme catalyses adenosine(1518)/adenosine(1519) in 16S rRNA + 4 S-adenosyl-L-methionine = N(6)-dimethyladenosine(1518)/N(6)-dimethyladenosine(1519) in 16S rRNA + 4 S-adenosyl-L-homocysteine + 4 H(+). Functionally, specifically dimethylates two adjacent adenosines (A1518 and A1519) in the loop of a conserved hairpin near the 3'-end of 16S rRNA in the 30S particle. May play a critical role in biogenesis of 30S subunits. The chain is Ribosomal RNA small subunit methyltransferase A from Mycoplasmoides gallisepticum (strain R(low / passage 15 / clone 2)) (Mycoplasma gallisepticum).